The chain runs to 412 residues: F-box/WD repeat-containing protein 4 (412 aa).

The F-box domain maps to G25–I71. 6 WD repeats span residues R154 to I190, T193 to L229, Q236 to L277, M283 to L321, K327 to R366, and H373 to F409.

In terms of assembly, part of a SCF (SKP1-cullin-F-box) protein ligase complex. Interacts with POUF51. In terms of tissue distribution, expressed in brain, kidney, lung and liver.

Its function is as follows. Probably recognizes and binds to some phosphorylated proteins and promotes their ubiquitination and degradation. Likely to be involved in key signaling pathways crucial for normal limb development. May participate in Wnt signaling. This is F-box/WD repeat-containing protein 4 (FBXW4) from Homo sapiens (Human).